The primary structure comprises 119 residues: uncharacterized protein (119 aa).

This is an uncharacterized protein from Saccharomyces cerevisiae (strain ATCC 204508 / S288c) (Baker's yeast).